The primary structure comprises 242 residues: Venom nerve growth factor 3 (242 aa).

The N-terminal stretch at 1–18 (MSMLCYTLIIAFLIGIWA) is a signal peptide. The propeptide occupies 19–125 (APQSEDNVPL…ALNRNIQAKR (107 aa)). Positions 45-69 (HEGLKTSRNTDQRHPAPKKVDDQEP) are disordered. Residues 46–66 (EGLKTSRNTDQRHPAPKKVDD) are compositionally biased toward basic and acidic residues. Cystine bridges form between cysteine 139–cysteine 203, cysteine 181–cysteine 231, and cysteine 191–cysteine 233.

Belongs to the NGF-beta family. Homodimer; non-covalently linked. Expressed by the venom gland.

The protein resides in the secreted. Nerve growth factor is important for the development and maintenance of the sympathetic and sensory nervous systems. It stimulates division and differentiation of sympathetic and embryonic sensory neurons as well as basal forebrain cholinergic neurons in the brain. Its relevance in the snake venom is not clear. However, it has been shown to inhibit metalloproteinase-dependent proteolysis of platelet glycoprotein Ib alpha, suggesting a metalloproteinase inhibition to prevent metalloprotease autodigestion and/or protection against prey proteases. Binds a lipid between the two protein chains in the homodimer. The lipid-bound form promotes histamine relase from mouse mast cells, contrary to the lipid-free form. The polypeptide is Venom nerve growth factor 3 (Pseudechis australis (Mulga snake)).